The primary structure comprises 452 residues: Probable carboxypeptidase ACLA_088580 (452 aa).

A signal peptide spans 1-18 (MRSLTLLLSLSTALRSVA). N-linked (GlcNAc...) asparagine glycans are attached at residues Asn-107 and Asn-156. Residue Asp-175 coordinates Zn(2+). Glu-207 serves as the catalytic Proton acceptor. Residue Glu-208 participates in Zn(2+) binding.

It belongs to the peptidase M20A family. Requires Zn(2+) as cofactor.

It localises to the secreted. This is Probable carboxypeptidase ACLA_088580 from Aspergillus clavatus (strain ATCC 1007 / CBS 513.65 / DSM 816 / NCTC 3887 / NRRL 1 / QM 1276 / 107).